The following is a 194-amino-acid chain: Large ribosomal subunit protein bL27c (194 aa).

The N-terminal 57 residues, Met1–Ser57, are a transit peptide targeting the chloroplast. The interval Ser57–Arg76 is disordered.

Component of the chloroplast large ribosomal subunit (LSU). Mature 70S chloroplast ribosomes of higher plants consist of a small (30S) and a large (50S) subunit. The 30S small subunit contains 1 molecule of ribosomal RNA (16S rRNA) and 24 different proteins. The 50S large subunit contains 3 rRNA molecules (23S, 5S and 4.5S rRNA) and 33 different proteins.

It localises to the plastid. The protein resides in the chloroplast. Functionally, component of the chloroplast ribosome (chloro-ribosome), a dedicated translation machinery responsible for the synthesis of chloroplast genome-encoded proteins, including proteins of the transcription and translation machinery and components of the photosynthetic apparatus. In Spinacia oleracea (Spinach), this protein is Large ribosomal subunit protein bL27c (RPL27).